Consider the following 172-residue polypeptide: S-ribosylhomocysteine lyase (172 aa).

The Fe cation site is built by H54, H58, and C128.

This sequence belongs to the LuxS family. As to quaternary structure, homodimer. Requires Fe cation as cofactor.

It carries out the reaction S-(5-deoxy-D-ribos-5-yl)-L-homocysteine = (S)-4,5-dihydroxypentane-2,3-dione + L-homocysteine. Involved in the synthesis of autoinducer 2 (AI-2) which is secreted by bacteria and is used to communicate both the cell density and the metabolic potential of the environment. The regulation of gene expression in response to changes in cell density is called quorum sensing. Catalyzes the transformation of S-ribosylhomocysteine (RHC) to homocysteine (HC) and 4,5-dihydroxy-2,3-pentadione (DPD). This chain is S-ribosylhomocysteine lyase, found in Vibrio parahaemolyticus serotype O3:K6 (strain RIMD 2210633).